Here is a 155-residue protein sequence, read N- to C-terminus: Crossover junction endodeoxyribonuclease RuvC (155 aa).

Catalysis depends on residues Asp7, Glu68, and Asp140. Mg(2+) contacts are provided by Asp7, Glu68, and Asp140.

The protein belongs to the RuvC family. In terms of assembly, homodimer which binds Holliday junction (HJ) DNA. The HJ becomes 2-fold symmetrical on binding to RuvC with unstacked arms; it has a different conformation from HJ DNA in complex with RuvA. In the full resolvosome a probable DNA-RuvA(4)-RuvB(12)-RuvC(2) complex forms which resolves the HJ. The cofactor is Mg(2+).

The protein resides in the cytoplasm. It carries out the reaction Endonucleolytic cleavage at a junction such as a reciprocal single-stranded crossover between two homologous DNA duplexes (Holliday junction).. The RuvA-RuvB-RuvC complex processes Holliday junction (HJ) DNA during genetic recombination and DNA repair. Endonuclease that resolves HJ intermediates. Cleaves cruciform DNA by making single-stranded nicks across the HJ at symmetrical positions within the homologous arms, yielding a 5'-phosphate and a 3'-hydroxyl group; requires a central core of homology in the junction. The consensus cleavage sequence is 5'-(A/T)TT(C/G)-3'. Cleavage occurs on the 3'-side of the TT dinucleotide at the point of strand exchange. HJ branch migration catalyzed by RuvA-RuvB allows RuvC to scan DNA until it finds its consensus sequence, where it cleaves and resolves the cruciform DNA. This chain is Crossover junction endodeoxyribonuclease RuvC, found in Prochlorococcus marinus (strain SARG / CCMP1375 / SS120).